The sequence spans 402 residues: Protein arginine methyltransferase NDUFAF7 homolog, mitochondrial (402 aa).

The protein belongs to the NDUFAF7 family.

Its subcellular location is the mitochondrion. It carries out the reaction L-arginyl-[protein] + 2 S-adenosyl-L-methionine = N(omega),N(omega)'-dimethyl-L-arginyl-[protein] + 2 S-adenosyl-L-homocysteine + 2 H(+). Functionally, arginine methyltransferase involved in the assembly or stability of mitochondrial NADH:ubiquinone oxidoreductase complex (complex I). This is Protein arginine methyltransferase NDUFAF7 homolog, mitochondrial from Saccharomyces cerevisiae (strain ATCC 204508 / S288c) (Baker's yeast).